Consider the following 567-residue polypeptide: Arginine--tRNA ligase (567 aa).

A 'HIGH' region motif is present at residues 128–138; sequence ANPTGPLHVGH.

It belongs to the class-I aminoacyl-tRNA synthetase family. In terms of assembly, monomer.

Its subcellular location is the cytoplasm. It catalyses the reaction tRNA(Arg) + L-arginine + ATP = L-arginyl-tRNA(Arg) + AMP + diphosphate. The chain is Arginine--tRNA ligase from Acidovorax ebreus (strain TPSY) (Diaphorobacter sp. (strain TPSY)).